The primary structure comprises 156 residues: Small ribosomal subunit protein uS7 (156 aa).

The protein belongs to the universal ribosomal protein uS7 family. In terms of assembly, part of the 30S ribosomal subunit. Contacts proteins S9 and S11.

One of the primary rRNA binding proteins, it binds directly to 16S rRNA where it nucleates assembly of the head domain of the 30S subunit. Is located at the subunit interface close to the decoding center, probably blocks exit of the E-site tRNA. The chain is Small ribosomal subunit protein uS7 from Bartonella tribocorum (strain CIP 105476 / IBS 506).